Consider the following 247-residue polypeptide: UPF0280 protein MmarC7_0482 (247 aa).

Belongs to the UPF0280 family.

The chain is UPF0280 protein MmarC7_0482 from Methanococcus maripaludis (strain C7 / ATCC BAA-1331).